A 695-amino-acid chain; its full sequence is UvrABC system protein B (695 aa).

Residues 45-434 enclose the Helicase ATP-binding domain; that stretch reads EGIEDGLSFQ…QVVEQVVRPT (390 aa). 58-65 contributes to the ATP binding site; that stretch reads GVTGSGKT. Residues 111–134 carry the Beta-hairpin motif; sequence YYDYYQPEAYVPQRDLFIEKDSSI. A Helicase C-terminal domain is found at 449 to 602; that stretch reads QVDDLLSEIN…QMAFNEANGI (154 aa). The 36-residue stretch at 646–681 folds into the UVR domain; sequence SKEIKRLEKLMMDHAKNLEFEKAAQVRDQLAKLKAQ.

Belongs to the UvrB family. Forms a heterotetramer with UvrA during the search for lesions. Interacts with UvrC in an incision complex.

It is found in the cytoplasm. Functionally, the UvrABC repair system catalyzes the recognition and processing of DNA lesions. A damage recognition complex composed of 2 UvrA and 2 UvrB subunits scans DNA for abnormalities. Upon binding of the UvrA(2)B(2) complex to a putative damaged site, the DNA wraps around one UvrB monomer. DNA wrap is dependent on ATP binding by UvrB and probably causes local melting of the DNA helix, facilitating insertion of UvrB beta-hairpin between the DNA strands. Then UvrB probes one DNA strand for the presence of a lesion. If a lesion is found the UvrA subunits dissociate and the UvrB-DNA preincision complex is formed. This complex is subsequently bound by UvrC and the second UvrB is released. If no lesion is found, the DNA wraps around the other UvrB subunit that will check the other stand for damage. The polypeptide is UvrABC system protein B (Cupriavidus pinatubonensis (strain JMP 134 / LMG 1197) (Cupriavidus necator (strain JMP 134))).